The chain runs to 476 residues: Adenosylhomocysteinase (476 aa).

Substrate contacts are provided by Thr67, Asp142, and Glu202. 203-205 (TTT) contributes to the NAD(+) binding site. Residues Lys232 and Asp236 each contribute to the substrate site. NAD(+) contacts are provided by residues Asn237, 266–271 (GYGDVG), Glu289, Asn324, 345–347 (IGH), and Asn390.

Belongs to the adenosylhomocysteinase family. It depends on NAD(+) as a cofactor.

The protein localises to the cytoplasm. It carries out the reaction S-adenosyl-L-homocysteine + H2O = L-homocysteine + adenosine. It functions in the pathway amino-acid biosynthesis; L-homocysteine biosynthesis; L-homocysteine from S-adenosyl-L-homocysteine: step 1/1. May play a key role in the regulation of the intracellular concentration of adenosylhomocysteine. The chain is Adenosylhomocysteinase from Synechococcus sp. (strain CC9311).